The primary structure comprises 415 residues: Putative O-antigen transporter (415 aa).

The Cytoplasmic segment spans residues 1–11 (MNTNKLSLRRN). A helical transmembrane segment spans residues 12-32 (VIYLAVVQGSNYLLPLLTFPY). Topologically, residues 33-41 (LVRTLGPEN) are periplasmic. Residues 42–62 (FGIFGFCQATMLYMIMFVEYG) traverse the membrane as a helical segment. Residues 63–83 (FNLTATQSIAKAADSKDKVTS) are Cytoplasmic-facing. A helical transmembrane segment spans residues 84-104 (IFWAVIFSKIVLIVITLIFLT). Topologically, residues 105–117 (SMTLLVPEYNKHA) are periplasmic. The helical transmembrane segment at 118-138 (VIIWSFVPALVGNLIYPIWLF) threads the bilayer. Topologically, residues 139 to 173 (QGKEKMKWLTLSSILSRLAIIPLTFIFVNTKSDIA) are cytoplasmic. The chain crosses the membrane as a helical span at residues 174-194 (IAGFIQSSANLVAGIIALAIV). The Periplasmic portion of the chain corresponds to 195 to 220 (VHEGWIGKVTLSLHNVRRSLADGFHV). Residues 221–241 (FISTSAISLYSTGIVIILGFI) traverse the membrane as a helical segment. Residues 242 to 295 (SGPTSVGNFNAANTIRNALQGLLNPITQAIYPRISSTLVLNRVKGVILIKKSLT) lie on the Cytoplasmic side of the membrane. A helical membrane pass occupies residues 296 to 316 (CLSLIGGAFSLILLLGASILV). Residues 317–328 (KISIGPGYDNAV) are Periplasmic-facing. A helical transmembrane segment spans residues 329-349 (IVLMIISPLPFLISLSNVYGI). Residues 350–362 (QVMLTHNYKKEFS) lie on the Cytoplasmic side of the membrane. The chain crosses the membrane as a helical span at residues 363-383 (KILIAAGLLSLLLIFPLTTLF). Residues 384-385 (KE) are Periplasmic-facing. A helical transmembrane segment spans residues 386 to 406 (IGAAITLLATECLVTSLMLMF). Residues 407-415 (VRNNKLLVC) lie on the Cytoplasmic side of the membrane.

Belongs to the polysaccharide synthase family.

It is found in the cell inner membrane. It functions in the pathway bacterial outer membrane biogenesis; LPS O-antigen biosynthesis. Functionally, may be involved in the translocation process of the nascent O-polysaccharide molecules and/or its ligation to lipid A core units. This Escherichia coli (strain K12) protein is Putative O-antigen transporter (rfbX).